Here is a 288-residue protein sequence, read N- to C-terminus: MAGARLLQEGRVSIVSFTLGASVISLPLLTSSFTEQTLLAAAPGRIALVFFIAALNGLLLLLYKAQLYQVAIRASFLGFAFGCGLLLSITQSPWKPFGWYVCSLSFFHYSEYLVTAMNNPRSLSIDSFLLNHSLEYTLAALSSWVEFTIETTIYPDLKQITWLSVIGLIMVLFGEVLRKCAMLTAGSNFNHIVQNEKSDSHTLVTSGVYSWFRHPSYVGWFYWSIGTQVLLCNPLCLVGYTLASWRFFSERIEEEEFSLIHFFGENYLEYKKKVPTGLPFIKGVKMEP.

Residues 13–29 (SIVSFTLGASVISLPLL) form a helical membrane-spanning segment. Topologically, residues 30–45 (TSSFTEQTLLAAAPGR) are lumenal. Residues 46-63 (IALVFFIAALNGLLLLLY) form a helical membrane-spanning segment. The Cytoplasmic segment spans residues 64–73 (KAQLYQVAIR). The chain crosses the membrane as a helical span at residues 74 to 91 (ASFLGFAFGCGLLLSITQ). Residues 92–96 (SPWKP) lie on the Lumenal side of the membrane. The helical transmembrane segment at 97–116 (FGWYVCSLSFFHYSEYLVTA) threads the bilayer. The Cytoplasmic portion of the chain corresponds to 117–135 (MNNPRSLSIDSFLLNHSLE). Residues 136 to 153 (YTLAALSSWVEFTIETTI) form a helical membrane-spanning segment. The Lumenal segment spans residues 154–158 (YPDLK). The helical transmembrane segment at 159–178 (QITWLSVIGLIMVLFGEVLR) threads the bilayer. At 179–216 (KCAMLTAGSNFNHIVQNEKSDSHTLVTSGVYSWFRHPS) the chain is on the cytoplasmic side. S-adenosyl-L-methionine contacts are provided by residues Q194, 201-204 (HTLV), Y209, and 214-217 (HPSY). The helical transmembrane segment at 217–232 (YVGWFYWSIGTQVLLC) threads the bilayer. A topological domain (lumenal) is located at residue N233. A helical membrane pass occupies residues 234 to 248 (PLCLVGYTLASWRFF). Over 249-288 (SERIEEEEFSLIHFFGENYLEYKKKVPTGLPFIKGVKMEP) the chain is Cytoplasmic. Substrate is bound at residue R251. E255 is an S-adenosyl-L-methionine binding site.

It belongs to the class VI-like SAM-binding methyltransferase superfamily. Isoprenylcysteine carboxyl methyltransferase family.

The protein localises to the endoplasmic reticulum membrane. It carries out the reaction [protein]-C-terminal S-[(2E,6E)-farnesyl]-L-cysteine + S-adenosyl-L-methionine = [protein]-C-terminal S-[(2E,6E)-farnesyl]-L-cysteine methyl ester + S-adenosyl-L-homocysteine. Its function is as follows. Catalyzes the post-translational methylation of isoprenylated C-terminal cysteine residues. The sequence is that of Protein-S-isoprenylcysteine O-methyltransferase (icmt) from Xenopus laevis (African clawed frog).